The primary structure comprises 914 residues: MGPFKSSVFILILHLLEGALSNSLIQLNNNGYEGIVVAIDPNVPEDETLIQQIKDMVTQASLYLLEATGKRFYFKNVAILIPETWKTKADYVRPKLETYKNADVLVAESTPPGNDEPYTEQMGNCGEKGERIHLTPDFIAGKKLAEYGPQGRAFVHEWAHLRWGVFDEYNNDEKFYLSNGRIQAVRCSAGITGTNVVKKCQGGSCYTKRCTFNKVTGLYEKGCEFVLQSRQTEKASIMFAQHVDSIVEFCTEQNHNKEAPNKQNQKCNLRSTWEVIRDSEDFKKTTPMTTQPPNPTFSLLQIGQRIVCLVLDKSGSMATGNRLNRLNQAGQLFLLQTVELGSWVGMVTFDSAAHVQNELIQINSGSDRDTLAKRLPAAASGGTSICSGLRSAFTVIRKKYPTDGSEIVLLTDGEDNTISGCFNEVKQSGAIIHTVALGPSAAQELEELSKMTGGLQTYASDQVQNNGLIDAFGALSSGNGAVSQRSIQLESKGLTLQNSQWMNGTVIVDSTVGKDTLFLITWTMQPPQILLWDPSGQKQGGFVVDKNTKMAYLQIPGIAKVGTWKYSLQASSQTLTLTVTSRASNATLPPITVTSKTNKDTSKFPSPLVVYANIRQGASPILRASVTALIESVNGKTVTLELLDNGAGADATKDDGVYSRYFTTYDTNGRYSVKVRALGGVNAARRRVIPQQSGALYIPGWIENDEIQWNPPRPEINKDDVQHKQVCFSRTSSGGSFVASDVPNAPIPDLFPPGQITDLKAEIHGGSLINLTWTAPGDDYDHGTAHKYIIRISTSILDLRDKFNESLQVNTTALIPKEANSEEVFLFKPENITFENGTDLFIAIQAVDKVDLKSEISNIARVSLFIPPQTPPETPSPDETSAPCPNIHINSTIPGIHILKIMWKWIGELQLSIA.

A signal peptide spans 1–21; sequence MGPFKSSVFILILHLLEGALS. The tract at residues 46–199 is metalloprotease domain; that stretch reads DETLIQQIKD…GITGTNVVKK (154 aa). A Zn(2+)-binding site is contributed by histidine 156. Glutamate 157 is an active-site residue. 2 residues coordinate Zn(2+): histidine 160 and aspartate 167. Residues 306–475 enclose the VWFA domain; sequence IVCLVLDKSG…NGLIDAFGAL (170 aa). N-linked (GlcNAc...) asparagine glycans are attached at residues asparagine 503, asparagine 585, asparagine 770, asparagine 804, asparagine 810, asparagine 831, asparagine 836, and asparagine 890.

This sequence belongs to the CLCR family. Glycosylated. In terms of processing, the 125-kDa product is autoproteolytically processed by the metalloprotease domain and yields to two cell-surface-associated subunits, a 90-kDa protein and a group of 37- to 41-kDa proteins. The cleavage is necessary for calcium-activated chloride channel (CaCC) activation activity. As to expression, highly expressed in small intestine and colon namely in intestinal basal crypt epithelia and goblet cells, and appendix. Weakly expressed in uterus, testis and kidney. Expressed in the airways epithelium of both asthmatic and healthy patients. Expressed in the bronchial epithelium, especially in mucus-producing goblet cells. Expressed in normal turbinate mucosa and nasal polyp. Expressed in.

The protein resides in the secreted. It localises to the extracellular space. Its subcellular location is the cell membrane. May be involved in mediating calcium-activated chloride conductance. May play critical roles in goblet cell metaplasia, mucus hypersecretion, cystic fibrosis and AHR. May be involved in the regulation of mucus production and/or secretion by goblet cells. Involved in the regulation of tissue inflammation in the innate immune response. May play a role as a tumor suppressor. Induces MUC5AC. This chain is Calcium-activated chloride channel regulator 1 (CLCA1), found in Homo sapiens (Human).